Consider the following 503-residue polypeptide: Asparagine--tRNA ligase (503 aa).

The protein belongs to the class-II aminoacyl-tRNA synthetase family. As to quaternary structure, homodimer.

The protein resides in the cytoplasm. The enzyme catalyses tRNA(Asn) + L-asparagine + ATP = L-asparaginyl-tRNA(Asn) + AMP + diphosphate + H(+). This is Asparagine--tRNA ligase from Aster yellows witches'-broom phytoplasma (strain AYWB).